The primary structure comprises 641 residues: Macrolide export ATP-binding/permease protein MacB (641 aa).

The ABC transporter domain occupies 2 to 240 (IKLENIKKSF…LKQNLKEIKP (239 aa)). 38 to 45 (GQSGSGKS) is an ATP binding site. The next 4 helical transmembrane spans lie at 268–288 (FLTMLGIIIGIASVICVVALA), 516–536 (LLISGIALISLMVGGIGVMNI), 565–585 (FLIEAILLCAIGGSIGIGLAY), and 601–621 (IFSTASIFIALGVSSLIGIVF).

The protein belongs to the ABC transporter superfamily. Macrolide exporter (TC 3.A.1.122) family. As to quaternary structure, homodimer.

It localises to the cell inner membrane. Functionally, non-canonical ABC transporter that contains transmembrane domains (TMD), which form a pore in the inner membrane, and an ATP-binding domain (NBD), which is responsible for energy generation. Confers resistance against macrolides. The chain is Macrolide export ATP-binding/permease protein MacB from Campylobacter fetus subsp. fetus (strain 82-40).